The sequence spans 782 residues: U-box domain-containing protein 7 (782 aa).

In terms of domain architecture, U-box spans 271–345; the sequence is VPPEELRCPI…ASWCEQNGTQ (75 aa). 5 ARM repeats span residues 456–499, 502–541, 542–581, 583–623, and 626–665; these read EEAR…NLAV, NRNKELMLTSGVIRLLEKMISSAESHGSATALYLNLSCLD, EAKSVIGSSQAVPFLVQLLQKEIETQCKLDALHALYNLST, SPNI…NLAS, and EGKDEAVSSQGMISSLATVLDMGDTTEQEQAVSCLLILCN. Residues 707–729 show a composition bias toward basic and acidic residues; the sequence is EERQQRDQPSSNRDEPPQKEPAR. The tract at residues 707 to 765 is disordered; sequence EERQQRDQPSSNRDEPPQKEPARKSLSAPLSVHGSTPASASVQDYEPRVLSKSMSRRKS. Positions 739-748 are enriched in polar residues; that stretch reads HGSTPASASV.

It catalyses the reaction S-ubiquitinyl-[E2 ubiquitin-conjugating enzyme]-L-cysteine + [acceptor protein]-L-lysine = [E2 ubiquitin-conjugating enzyme]-L-cysteine + N(6)-ubiquitinyl-[acceptor protein]-L-lysine.. Its pathway is protein modification; protein ubiquitination. Its function is as follows. Functions as an E3 ubiquitin ligase. This Arabidopsis thaliana (Mouse-ear cress) protein is U-box domain-containing protein 7 (PUB7).